A 327-amino-acid polypeptide reads, in one-letter code: Elongation factor P--(R)-beta-lysine ligase (327 aa).

Residue 78–80 (SPE) participates in substrate binding. ATP-binding positions include 102–104 (RNQ) and Asn-111. Tyr-120 is a binding site for substrate. 246-247 (EL) is an ATP binding site. Glu-253 is a substrate binding site. Gly-302 serves as a coordination point for ATP.

This sequence belongs to the class-II aminoacyl-tRNA synthetase family. EpmA subfamily. Homodimer.

The catalysed reaction is D-beta-lysine + L-lysyl-[protein] + ATP = N(6)-((3R)-3,6-diaminohexanoyl)-L-lysyl-[protein] + AMP + diphosphate + H(+). Functionally, with EpmB is involved in the beta-lysylation step of the post-translational modification of translation elongation factor P (EF-P). Catalyzes the ATP-dependent activation of (R)-beta-lysine produced by EpmB, forming a lysyl-adenylate, from which the beta-lysyl moiety is then transferred to the epsilon-amino group of a conserved specific lysine residue in EF-P. The polypeptide is Elongation factor P--(R)-beta-lysine ligase (Baumannia cicadellinicola subsp. Homalodisca coagulata).